Reading from the N-terminus, the 290-residue chain is N-acetylmannosamine kinase (290 aa).

ATP is bound by residues 6–13 and 132–139; these read ALDIGGTK and GVGGGIIL. Histidine 156, cysteine 166, cysteine 168, and cysteine 173 together coordinate Zn(2+).

It belongs to the ROK (NagC/XylR) family. NanK subfamily. As to quaternary structure, homodimer.

The enzyme catalyses an N-acyl-D-mannosamine + ATP = an N-acyl-D-mannosamine 6-phosphate + ADP + H(+). The protein operates within amino-sugar metabolism; N-acetylneuraminate degradation; D-fructose 6-phosphate from N-acetylneuraminate: step 2/5. Its function is as follows. Catalyzes the phosphorylation of N-acetylmannosamine (ManNAc) to ManNAc-6-P. This chain is N-acetylmannosamine kinase, found in Yersinia pseudotuberculosis serotype O:3 (strain YPIII).